Reading from the N-terminus, the 1191-residue chain is Phosphatidylinositol 3,4,5-trisphosphate 5-phosphatase 1 (1191 aa).

Positions 8–104 (WNHGNITRSK…GLVTHLQYPV (97 aa)) constitute an SH2 domain. The tract at residues 122 to 148 (SVMSPPELPPRNIPMSAGPSEAKDLPL) is disordered. Residues 127-132 (PELPPR) carry the SH3-binding 1 motif. Residue S246 is modified to Phosphoserine. The NPXY motif 1 motif lies at 915–918 (NPNY). Position 918 is a phosphotyrosine (Y918). S935 is subject to Phosphoserine. The residue at position 945 (Y945) is a Phosphotyrosine. Disordered stretches follow at residues 947–994 (QLPK…EARP) and 1021–1191 (YGSV…TAMQ). The segment covering 962–972 (PPTPPSQPPLS) has biased composition (pro residues). T964 carries the phosphothreonine modification. S967 and S972 each carry phosphoserine. Residues 970-975 (PLSPKK) carry the SH3-binding 2 motif. Residues 1015–1029 (MFENPLYGSVSSFPK) are interaction with DAB2. Positions 1018 to 1021 (NPLY) match the NPXY motif 2 motif. Y1021 carries the phosphotyrosine modification. Basic and acidic residues predominate over residues 1032–1046 (PRKEQESPKMLRKEP). The SH3-binding 3 motif lies at 1039-1050 (PKMLRKEPPPCP). Residues 1141 to 1150 (IPAPRPPLPV) are compositionally biased toward pro residues. A compositionally biased stretch (basic and acidic residues) spans 1162–1184 (KGRDYRDNTELPHHGKHRQEEGL).

The protein belongs to the inositol 1,4,5-trisphosphate 5-phosphatase family. Interacts with tyrosine phosphorylated form of SHC1. Interacts with tyrosine phosphorylated form of DOK1. Interacts with tyrosine phosphorylated form of DOK3. Interacts with tyrosine phosphorylated form of SLAMF1/CD150. Interacts with PTPN11/SHP-2 in response to IL-3. Interacts with receptor EPOR. Interacts with receptors MS4A2/FCER1B and FCER1G. Interacts with receptors FCGR2B and FCGR3. Interacts with receptor FCGR2A, leading to regulate gene expression during the phagocytic process. Interacts with GRB2. Interacts with PLCG1. Interacts with tyrosine kinases SRC and TEC. Interacts with CRKL. Interacts with c-Met/MET. Interacts with MILR1 (tyrosine-phosphorylated). Isoform 5 interacts with IL6ST/gp130. Can weakly interact (via NPXY motif 2) with DAB2 (via PID domain); the interaction is impaired by tyrosine phosphorylation of the NPXY motif. Interacts (via SH2 domain) with tyrosine phosphorylated KLRC1 (via ITIM). Interacts with MPL/TPOR. Tyrosine phosphorylated by the members of the SRC family after exposure to a diverse array of extracellular stimuli such as cytokines, growth factors, antibodies, chemokines, integrin ligands and hypertonic and oxidative stress. Phosphorylated upon IgG receptor FCGR2B-binding. In terms of tissue distribution, specifically expressed in immune and hematopoietic cells. Levels vary considerably within this compartment. Lost during erythropoiesis when erythroid cells become Ter119+. Increases substantially with T-cell maturation and when resting B-cells are activated. Also present in mature granulocytes, monocyte/macrophages, mast cells and platelets. Isoform 5 is the only form expressed in embryonic stem (ES) cells and is coexpressed with other isoforms in hematopoietic stem cells, and disappears with differentiation.

It is found in the cytoplasm. It localises to the cell membrane. The protein localises to the membrane raft. The protein resides in the cytoskeleton. It carries out the reaction a 1,2-diacyl-sn-glycero-3-phospho-(1D-myo-inositol-3,4,5-trisphosphate) + H2O = a 1,2-diacyl-sn-glycero-3-phospho-(1D-myo-inositol-3,4-bisphosphate) + phosphate. The catalysed reaction is a 1,2-diacyl-sn-glycero-3-phospho-(1D-myo-inositol-4,5-bisphosphate) + H2O = a 1,2-diacyl-sn-glycero-3-phospho-(1D-myo-inositol 4-phosphate) + phosphate. It catalyses the reaction 1D-myo-inositol 1,3,4,5-tetrakisphosphate + H2O = 1D-myo-inositol 1,3,4-trisphosphate + phosphate. Its activity is regulated as follows. Activated upon translocation to the sites of synthesis of PtdIns(3,4,5)P3 in the membrane. Functionally, phosphatidylinositol (PtdIns) phosphatase that specifically hydrolyzes the 5-phosphate of phosphatidylinositol-3,4,5-trisphosphate (PtdIns(3,4,5)P3) to produce PtdIns(3,4)P2, thereby negatively regulating the PI3K (phosphoinositide 3-kinase) pathways. Also able to hydrolyze the 5-phosphate of phosphatidylinositol-4,5-bisphosphate (PtdIns(4,5)P3) and inositol 1,3,4,5-tetrakisphosphate. Acts as a negative regulator of B-cell antigen receptor signaling. Mediates signaling from the FC-gamma-RIIB receptor (FCGR2B), playing a central role in terminating signal transduction from activating immune/hematopoietic cell receptor systems. Acts as a negative regulator of myeloid cell proliferation/survival and chemotaxis, mast cell degranulation, immune cells homeostasis, integrin alpha-IIb/beta-3 signaling in platelets and JNK signaling in B-cells. Regulates proliferation of osteoclast precursors, macrophage programming, phagocytosis and activation and is required for endotoxin tolerance. Involved in the control of cell-cell junctions, CD32a signaling in neutrophils and modulation of EGF-induced phospholipase C activity. Key regulator of neutrophil migration, by governing the formation of the leading edge and polarization required for chemotaxis. Modulates FCGR3/CD16-mediated cytotoxicity in NK cells. Mediates the activin/TGF-beta-induced apoptosis through its Smad-dependent expression. The chain is Phosphatidylinositol 3,4,5-trisphosphate 5-phosphatase 1 (Inpp5d) from Mus musculus (Mouse).